A 113-amino-acid polypeptide reads, in one-letter code: Ribonuclease P protein component (113 aa).

Belongs to the RnpA family. Consists of a catalytic RNA component (M1 or rnpB) and a protein subunit.

It carries out the reaction Endonucleolytic cleavage of RNA, removing 5'-extranucleotides from tRNA precursor.. In terms of biological role, RNaseP catalyzes the removal of the 5'-leader sequence from pre-tRNA to produce the mature 5'-terminus. It can also cleave other RNA substrates such as 4.5S RNA. The protein component plays an auxiliary but essential role in vivo by binding to the 5'-leader sequence and broadening the substrate specificity of the ribozyme. This Ureaplasma parvum serovar 3 (strain ATCC 27815 / 27 / NCTC 11736) protein is Ribonuclease P protein component.